Here is a 300-residue protein sequence, read N- to C-terminus: MAKVKVRIPATTANMGPGFDTLGMALKLYNEIEVEEINGKTQIYNNGLKSEEDFGNNLIYKSIIETMNKGGYSYKGFKINVVKCDVPISRGLGSSSACIVGGIKIANEIMGNKLELKDMIDLATKIEGHPDNVVPAMVGGMVVSLKTGEDIKYSKIDLPKQLKFVAMIPSFQVNTALSRKVLPKSYLKEECIFNISRCAMLVSALYNGEFDKLRTCFQDKIHQPYRKNLIKNSDDIFKKAVEFGSIGEFISGSGSTLMAVLNKNEDEFVISIKRYLSGLQDKWNVILLEPDLEGVRIVKI.

Residue 87-97 coordinates ATP; sequence PISRGLGSSSA.

It belongs to the GHMP kinase family. Homoserine kinase subfamily.

It localises to the cytoplasm. It carries out the reaction L-homoserine + ATP = O-phospho-L-homoserine + ADP + H(+). The protein operates within amino-acid biosynthesis; L-threonine biosynthesis; L-threonine from L-aspartate: step 4/5. Its function is as follows. Catalyzes the ATP-dependent phosphorylation of L-homoserine to L-homoserine phosphate. This is Homoserine kinase from Clostridium kluyveri (strain ATCC 8527 / DSM 555 / NBRC 12016 / NCIMB 10680 / K1).